The primary structure comprises 218 residues: Molybdenum cofactor guanylyltransferase (218 aa).

GTP-binding positions include 16-18 (LAG), Lys28, Asn56, Asp74, and Asp109. Asp109 contacts Mg(2+).

Belongs to the MobA family. In terms of assembly, monomer. It depends on Mg(2+) as a cofactor.

It is found in the cytoplasm. It catalyses the reaction Mo-molybdopterin + GTP + H(+) = Mo-molybdopterin guanine dinucleotide + diphosphate. Its function is as follows. Transfers a GMP moiety from GTP to Mo-molybdopterin (Mo-MPT) cofactor (Moco or molybdenum cofactor) to form Mo-molybdopterin guanine dinucleotide (Mo-MGD) cofactor. This chain is Molybdenum cofactor guanylyltransferase, found in Sinorhizobium fredii (strain NBRC 101917 / NGR234).